The following is a 123-amino-acid chain: MKQFIFFALLCTSTYAAIHILTEKEDHATLHISFNDLIKIQLRTNPSTGYAWNIEYPTDTFSLSQDTIKAEPHPSGMVGFPSIREIQLKPLKVGTTTIKLGYSRPWEKGKEPLRSLTYSVVIR.

Residues 1–16 (MKQFIFFALLCTSTYA) form the signal peptide. Positions 45-50 (NPSTGY) match the BC loop motif. The DE loop signature appears at 71–81 (EPHPSGMVGFP). The FG loop motif lies at 105-114 (PWEKGKEPLR).

Belongs to the protease inhibitor I42 family. Monomer. May form homodimer. Interacts with cysteine protease CP2. Interacts with cysteine protease CP5.

The protein resides in the cytoplasmic vesicle. The protein localises to the lysosome. It is found in the phagosome. Cysteine protease inhibitor. Inhibits cysteine proteases CP1, CP2 and to a lesser extent CP5. In Entamoeba histolytica (strain ATCC 30459 / HM-1:IMSS / ABRM), this protein is Amoebiasin-2.